The primary structure comprises 1136 residues: Tyrosine-protein kinase receptor Tie-1 (1136 aa).

An N-terminal signal peptide occupies residues 1–23; sequence MVWLEPPLLLPIFFLASHVGAAV. At 24 to 757 the chain is on the extracellular side; it reads DLTLLADLRL…IHAAEEGLDQ (734 aa). In terms of domain architecture, Ig-like C2-type 1 spans 43 to 106; sequence CVSGEAGAGR…PSDLVGVFSC (64 aa). N-linked (GlcNAc...) asparagine glycans are attached at residues Asn84 and Asn159. 3 EGF-like domains span residues 212 to 254, 256 to 301, and 303 to 343; these read GCEA…TRCE, ACRE…SQCQ, and ACAP…MHCE. Disulfide bonds link Cys226–Cys235, Cys229–Cys242, and Cys244–Cys253. 3 disulfides stabilise this stretch: Cys317/Cys325, Cys319/Cys331, and Cys333/Cys342. Residues 370–424 form the Ig-like C2-type 2 domain; sequence CAAAGNPFPVRGSMELRKPDGTVLLSTKAIVEPDRTTAEFEVPRLALGDSGLWEC. Fibronectin type-III domains lie at 444–543, 546–640, and 644–737; these read PPVP…CPEP, KPWL…LPPS, and APRH…TLGN. N-linked (GlcNAc...) asparagine glycans are attached at residues Asn501, Asn594, and Asn707. Residues 758–782 traverse the membrane as a helical segment; that stretch reads QLVLAVVGSVSATCLTILAALLTLA. Residues 783 to 1136 lie on the Cytoplasmic side of the membrane; that stretch reads CIRKSCLHRR…AGIDATAEEA (354 aa). Positions 837–1116 constitute a Protein kinase domain; it reads ITFEDLIGEG…RMLEARKAYV (280 aa). ATP is bound by residues 843–851 and Lys868; that span reads IGEGNFGQV. The active-site Proton acceptor is the Asp977. Phosphotyrosine; by autocatalysis is present on Tyr1005.

Belongs to the protein kinase superfamily. Tyr protein kinase family. Tie subfamily. In terms of assembly, heterodimer with TEK/TIE2. Interacts with SVEP1 (via C-terminus). Post-translationally, phosphorylated on tyrosine residues in response to ANGPT1, most likely by TEK/TIE2. In terms of tissue distribution, specifically expressed in developing vascular endothelial cells.

The protein localises to the cell membrane. It catalyses the reaction L-tyrosyl-[protein] + ATP = O-phospho-L-tyrosyl-[protein] + ADP + H(+). In terms of biological role, transmembrane tyrosine-protein kinase that may modulate TEK/TIE2 activity and contribute to the regulation of angiogenesis. In Bos taurus (Bovine), this protein is Tyrosine-protein kinase receptor Tie-1 (TIE1).